We begin with the raw amino-acid sequence, 423 residues long: MLDTLLINIGQLLTMDQEDGLLRREAMNTLPVIENGAVGIENGVVTFVGTAEEAKGLQAKEVIDCDGKMVSPGLVDPHTHLVFGGSRENEIALKLQGVPYLEILEQGGGILSTVNATKQASKEELVQKAKFHLDRMLSFGVTTVEAKSGYGLDDETEWKQLEATAQLQKEHSIDLVSTFLGAHAVPKEYKGRSKEFLQWMLDLLPEMKEKQLAEFVDIFCETGVFSVEESKEFLLKAKELGFDVKIHADEIDPLGGAEAAAEIGAASADHLVGASDKGIEMLANSNTVATLLPGTTFYLNKESFARGRKMIDEGVAVALATDFNPGSCPTENIQLIMSIAMLKLKMTPEEVWNAVTVNSSYAINRGDVAGKIRVGRKADLVLWDAYNYAYVPYHYGVSHVNTVWKNGNIAYTRGEQSWSTATI.

Positions 78 and 80 each coordinate Fe(3+). Zn(2+)-binding residues include His-78 and His-80. Residues Arg-87, Tyr-150, and His-183 each coordinate 4-imidazolone-5-propanoate. Tyr-150 contributes to the N-formimidoyl-L-glutamate binding site. His-247 lines the Fe(3+) pocket. His-247 lines the Zn(2+) pocket. Glu-250 lines the 4-imidazolone-5-propanoate pocket. Asp-322 contacts Fe(3+). Asp-322 lines the Zn(2+) pocket. Positions 324 and 326 each coordinate N-formimidoyl-L-glutamate. Ser-327 is a binding site for 4-imidazolone-5-propanoate.

This sequence belongs to the metallo-dependent hydrolases superfamily. HutI family. It depends on Zn(2+) as a cofactor. The cofactor is Fe(3+).

Its subcellular location is the cytoplasm. It catalyses the reaction 4-imidazolone-5-propanoate + H2O = N-formimidoyl-L-glutamate. The protein operates within amino-acid degradation; L-histidine degradation into L-glutamate; N-formimidoyl-L-glutamate from L-histidine: step 3/3. Functionally, catalyzes the hydrolytic cleavage of the carbon-nitrogen bond in imidazolone-5-propanoate to yield N-formimidoyl-L-glutamate. It is the third step in the universal histidine degradation pathway. The chain is Imidazolonepropionase from Bacillus mycoides (strain KBAB4) (Bacillus weihenstephanensis).